Here is a 293-residue protein sequence, read N- to C-terminus: Dehydrodolichyl diphosphate synthase complex subunit NUS1 (293 aa).

Helical transmembrane passes span 1–23 (MTGL…RTLT), 35–56 (WIWR…GFTL), and 117–135 (IASL…ISVY). Residues N144 and N271 are each glycosylated (N-linked (GlcNAc...) asparagine). An RXG motif; crucial for prenyltransferase activity motif is present at residues 290–292 (RLG). The isopentenyl diphosphate site is built by L291 and G292.

It belongs to the UPP synthase family. As to quaternary structure, the active dehydrodolichyl diphosphate synthase complex is a heterotetramer composed of a dimer of heterodimer of DHDDS and NUS1. Interacts with NPC2. Requires Mg(2+) as cofactor.

The protein localises to the endoplasmic reticulum membrane. The enzyme catalyses n isopentenyl diphosphate + (2E,6E)-farnesyl diphosphate = a di-trans,poly-cis-polyprenyl diphosphate + n diphosphate. Its pathway is protein modification; protein glycosylation. The protein operates within lipid metabolism. With respect to regulation, activated by phospholipids including cardiolipin, phosphatidylcholine, phosphatidylethanolamine, phosphatidylinositol and phosphatidylserine. In terms of biological role, with DHDDS, forms the dehydrodolichyl diphosphate synthase (DDS) complex, an essential component of the dolichol monophosphate (Dol-P) biosynthetic machinery. Both subunits contribute to enzymatic activity, i.e. condensation of multiple copies of isopentenyl pyrophosphate (IPP) to farnesyl pyrophosphate (FPP) to produce dehydrodolichyl diphosphate (Dedol-PP), a precursor of dolichol phosphate which is utilized as a sugar carrier in protein glycosylation in the endoplasmic reticulum (ER). Synthesizes long-chain polyprenols, mostly of C95 and C100 chain length. Regulates the glycosylation and stability of nascent NPC2, thereby promoting trafficking of LDL-derived cholesterol. Acts as a specific receptor for the N-terminus of Nogo-B, a neural and cardiovascular regulator. This chain is Dehydrodolichyl diphosphate synthase complex subunit NUS1, found in Homo sapiens (Human).